We begin with the raw amino-acid sequence, 202 residues long: Precorrin-2 dehydrogenase (202 aa).

NAD(+) is bound by residues threonine 20–isoleucine 21 and proline 41–threonine 42.

It belongs to the precorrin-2 dehydrogenase / sirohydrochlorin ferrochelatase family. Homodimer.

The catalysed reaction is precorrin-2 + NAD(+) = sirohydrochlorin + NADH + 2 H(+). Its pathway is cofactor biosynthesis; adenosylcobalamin biosynthesis; sirohydrochlorin from precorrin-2: step 1/1. It participates in porphyrin-containing compound metabolism; siroheme biosynthesis; sirohydrochlorin from precorrin-2: step 1/1. Its function is as follows. Catalyzes the dehydrogenation of precorrin-2 to form sirohydrochlorin which is used as a precursor in both siroheme biosynthesis and in the anaerobic branch of adenosylcobalamin biosynthesis. It is unable to oxidize precorrin-3. In Priestia megaterium (Bacillus megaterium), this protein is Precorrin-2 dehydrogenase (sirC).